Reading from the N-terminus, the 550-residue chain is Forkhead box protein N4 (550 aa).

The fork-head DNA-binding region spans 231-327; that stretch reads KPIYSYSCLI…EEMQKWKRKD (97 aa). Residues 402-411 show a composition bias toward low complexity; the sequence is LQNQSRLAPS. A disordered region spans residues 402 to 437; that stretch reads LQNQSRLAPSSPAPAQTPPLHTVPDMTNSSLPQHPA.

In terms of tissue distribution, isoform 1 is expressed mainly in adult thymus. Isoform 2 is detected in adult skin. Isoform 3 is expressed in adult brain and embryo. Prominent expression sites include the olfactory placode, the basal layer of the olfactory epithelium, the neuroepithelium of the developing retina, the germinal zone of the differentiated eye, regions of motoneuron development in the neural tube and periventricular regions of the brain.

The protein resides in the nucleus. In terms of biological role, transcription factor essential for neural and some non-neural tissues development. Binds to an 11-bp consensus sequence containing the invariant tetranucleotide 5'-ACGC-3'. During development of the central nervous system, required to specify the amacrine and horizontal cell fates from multipotent retinal progenitors while suppressing the alternative photoreceptor cell fates. Drives commitment of p2 progenitors to the V2b interneuron fates during spinal cord neurogenesis. In development of non-neural tissues, plays an essential role in the specification of the atrioventricular canal. In Danio rerio (Zebrafish), this protein is Forkhead box protein N4 (foxn4).